The chain runs to 307 residues: Ribonuclease Z (307 aa).

Residues H63, H65, D67, H68, H143, D213, and H271 each contribute to the Zn(2+) site. The active-site Proton acceptor is D67.

The protein belongs to the RNase Z family. As to quaternary structure, homodimer. Zn(2+) is required as a cofactor.

The catalysed reaction is Endonucleolytic cleavage of RNA, removing extra 3' nucleotides from tRNA precursor, generating 3' termini of tRNAs. A 3'-hydroxy group is left at the tRNA terminus and a 5'-phosphoryl group is left at the trailer molecule.. Functionally, zinc phosphodiesterase, which displays some tRNA 3'-processing endonuclease activity. Probably involved in tRNA maturation, by removing a 3'-trailer from precursor tRNA. This chain is Ribonuclease Z, found in Lactococcus lactis subsp. cremoris (strain MG1363).